A 126-amino-acid chain; its full sequence is Fluoride-specific ion channel FluC (126 aa).

Helical transmembrane passes span 4 to 24 (SILA…FLGI), 35 to 55 (LGTF…VAGF), 68 to 88 (FVIT…AEVV), and 103 to 123 (IVIH…TVSL). Residues Gly-75 and Ser-78 each contribute to the Na(+) site.

This sequence belongs to the fluoride channel Fluc/FEX (TC 1.A.43) family.

The protein resides in the cell inner membrane. It catalyses the reaction fluoride(in) = fluoride(out). Its activity is regulated as follows. Na(+) is not transported, but it plays an essential structural role and its presence is essential for fluoride channel function. In terms of biological role, fluoride-specific ion channel. Important for reducing fluoride concentration in the cell, thus reducing its toxicity. In Paraburkholderia xenovorans (strain LB400), this protein is Fluoride-specific ion channel FluC.